The following is a 762-amino-acid chain: MFIFIFLSLWTLLVMGREEGGVGSEEGVGKQCHPSLPPRCPSRSPSDQPWTHPDQSQLFADLSREELTAVMSFLTQKLGPDLVDAAQARPSDNCIFSVELQLPPKAAALAHLDRRSPPPAREALAIVFFGGQPQPNVTELVVGPLPQPSYMRDVTVERHGGPLPYYRHTVLLREYLDIDQMIFNRELPQAAGVLHHCCSYKQGGGNLVTMTTAPPGLQSGDRATWFGLYYNISKAGYYLHPVGLELLVDHKALDPAQWTIQKVFFQGRYYESLVQLEEQFEAGRVNVVVIPNNGTGGSWSLKSQVPPGPTPPLQFHPQGTRFSVQGSRVTSSLWTFSFGLGAFSGPRIFDIRFQGERLAYEISLQEAVAIYGGNTPAAMLTRYMDACFGMGKFATPLTRGVDCPYLATYVDWHFLLESQAPKTLHDAFCVFEQNKGLPLRRHHSDFISQYFGGVVETVLVFRSVSTLLNYDYVWDMVFHPNGAIEVKFHVTGYISSAFFFGTAQKYGNQVRENTLGTVHTHSAHYKVDLDVGGLENWVWAEDMAFVPTTVPWSPEHQIQRLQVIRKQLETEEQAAFPLGGGSPRYLYLASKQSNKWGHPRGYRIQTVSFAGRPLPQNSSTERAISWGRYQLAVTQRKETEPSSSSVFNQNDPWTPTVDFADFINNETIAGKDLVAWVTAGFLHIPHAEDIPNTVTVGNGVGFFLRPYNFFDQEPSMDSADSIYFREGQDAGSCEINPLACLPQAATCAPDLPVFSHGGYPEY.

Residues 1-16 (MFIFIFLSLWTLLVMG) form the signal peptide. The interval 23-54 (GSEEGVGKQCHPSLPPRCPSRSPSDQPWTHPD) is disordered. Asn-136 is a glycosylation site (N-linked (GlcNAc...) asparagine). Cys-197 and Cys-198 are disulfide-bonded. Thr-211 carries an O-linked (GalNAc...) threonine glycan. N-linked (GlcNAc...) asparagine glycans are attached at residues Asn-231 and Asn-293. Substrate is bound at residue 383–393 (YMDACFGMGKF). Asp-385 serves as the catalytic Proton acceptor. A disulfide bridge connects residues Cys-403 and Cys-429. Residue 467–472 (LLNYDY) coordinates substrate. Tyr-470 functions as the Schiff-base intermediate with substrate; via topaquinone in the catalytic mechanism. Position 470 is a 2',4',5'-topaquinone (Tyr-470). 2 residues coordinate Cu cation: His-519 and His-521. Ca(2+)-binding residues include Asp-528, Leu-529, Asp-530, and Glu-571. 577 to 584 (PLGGGSPR) contributes to the heparin binding site. Residue Asn-617 is glycosylated (N-linked (GlcNAc...) asparagine). Residues Phe-662 and Asn-664 each contribute to the Ca(2+) site. The N-linked (GlcNAc...) asparagine glycan is linked to Asn-665. Glu-666, Asp-672, and Leu-673 together coordinate Ca(2+). His-683 provides a ligand contact to Cu cation. Cys-733 and Cys-740 are disulfide-bonded.

The protein belongs to the copper/topaquinone oxidase family. Homodimer; disulfide-linked. Requires Cu cation as cofactor. Ca(2+) is required as a cofactor. L-topaquinone serves as cofactor. Topaquinone (TPQ) is generated by copper-dependent autoxidation of a specific tyrosyl residue. As to expression, expressed in lung, spleen, heart and kidney.

The protein localises to the secreted. The protein resides in the extracellular space. The enzyme catalyses a primary methyl amine + O2 + H2O = an aldehyde + H2O2 + NH4(+). In Bos taurus (Bovine), this protein is Primary amine oxidase, lung isozyme.